We begin with the raw amino-acid sequence, 512 residues long: Maturase K (512 aa).

The protein belongs to the intron maturase 2 family. MatK subfamily.

The protein localises to the plastid. It is found in the chloroplast. Usually encoded in the trnK tRNA gene intron. Probably assists in splicing its own and other chloroplast group II introns. This is Maturase K from Ginkgo biloba (Ginkgo).